The chain runs to 410 residues: Solute carrier family 52, riboflavin transporter, member 3 (410 aa).

The next 3 helical transmembrane spans lie at 3-23 (ILIYALACAFGLGSWLAINGL), 40-60 (LPSYLTVIIQLANLGPLLVTL), and 73-93 (VVIYTILCIGVLACFLLAFFL). N157 carries N-linked (GlcNAc...) asparagine glycosylation. Transmembrane regions (helical) follow at residues 158–178 (FTTEVFFFFLAVMMCISLAAF), 239–259 (FQLTFIYLMVVWVNGTTNGLL), 277–297 (LSAALASVANPVACIVAMFFP), 301–321 (LVFLGLLCVMGTGFASYNMAM), 334–354 (ALGEAIIVLSWVFFTGSLSYV), and 369–389 (ALVWCGAAAQIGSLIGSVIMF).

This sequence belongs to the riboflavin transporter family.

Its subcellular location is the cell membrane. The catalysed reaction is riboflavin(in) = riboflavin(out). Its function is as follows. Plasma membrane transporter mediating the uptake by cells of the water soluble vitamin B2/riboflavin that plays a key role in biochemical oxidation-reduction reactions of the carbohydrate, lipid, and amino acid metabolism. In Osmerus mordax (Rainbow smelt), this protein is Solute carrier family 52, riboflavin transporter, member 3 (slc52a3).